The following is a 326-amino-acid chain: RNA-binding motif protein, X-linked 2 (326 aa).

Lys-8 is covalently cross-linked (Glycyl lysine isopeptide (Lys-Gly) (interchain with G-Cter in SUMO2)). Residues 36-114 (AWIFVGGLPY…RTIRVDHVSN (79 aa)) form the RRM domain. A disordered region spans residues 117 to 326 (APQESEDVDD…SYHGSDRRHH (210 aa)). Thr-140 is modified (phosphothreonine). Ser-149 carries the post-translational modification Phosphoserine. The segment covering 157-172 (TKKHKKDKKEKKKRKK) has biased composition (basic residues). A compositionally biased stretch (polar residues) spans 177-190 (GQAQAEQPSCSRSA). 4 stretches are compositionally biased toward basic and acidic residues: residues 191–200 (TVKEKKDERA), 207–219 (KTSE…EHRE), 236–245 (ARAEDPECKA), and 255–273 (KSAS…ERGR). Ser-274 bears the Phosphoserine mark. The span at 291–312 (HRSRSRSRSPDKSHRHKKYRHS) shows a compositional bias: basic residues. The span at 313-326 (RERDSYHGSDRRHH) shows a compositional bias: basic and acidic residues.

This sequence belongs to the IST3 family. In terms of assembly, part of the activated spliceosome B/catalytic step 1 spliceosome, one of the forms of the spliceosome which has a well-formed active site but still cannot catalyze the branching reaction and is composed of at least 52 proteins, the U2, U5 and U6 snRNAs and the pre-mRNA. Component of the minor spliceosome, which splices U12-type introns.

It localises to the nucleus. Its function is as follows. Involved in pre-mRNA splicing as component of the activated spliceosome. As a component of the minor spliceosome, involved in the splicing of U12-type introns in pre-mRNAs. The sequence is that of RNA-binding motif protein, X-linked 2 (Rbmx2) from Mus musculus (Mouse).